Here is a 304-residue protein sequence, read N- to C-terminus: Quinolinate synthase (304 aa).

His23 and Ser40 together coordinate iminosuccinate. [4Fe-4S] cluster is bound at residue Cys85. Iminosuccinate is bound by residues Tyr111–Asn113 and Ser128. Residue Cys171 participates in [4Fe-4S] cluster binding. Iminosuccinate contacts are provided by residues His197–Glu199 and Thr214. Cys259 serves as a coordination point for [4Fe-4S] cluster.

It belongs to the quinolinate synthase family. Type 2 subfamily. It depends on [4Fe-4S] cluster as a cofactor.

It localises to the cytoplasm. It carries out the reaction iminosuccinate + dihydroxyacetone phosphate = quinolinate + phosphate + 2 H2O + H(+). Its pathway is cofactor biosynthesis; NAD(+) biosynthesis; quinolinate from iminoaspartate: step 1/1. Its function is as follows. Catalyzes the condensation of iminoaspartate with dihydroxyacetone phosphate to form quinolinate. This chain is Quinolinate synthase, found in Clostridioides difficile (strain 630) (Peptoclostridium difficile).